Reading from the N-terminus, the 411-residue chain is MAKLLAMILAGGEGRRLDPLTRERAKPAVPFGGRYRIVDFVLSNFANSGVLKMKVLVQYKSESLNAHIQRGWRLTALLDQYVEIVPAQMRVGPKWFEGSADAIYQNLNIITDEEPEFTFIFGADHVYRMDVRQMLQFHQDKGADLTVAAIPVPVEEASEFGIIEVDGDGRMIGFVEKPKAGVKTMPGDPTRALASMGNYLFTTDALVQEIVRDAGDTKSAHDFGKSIVAAMYERKRVFVYDFAKNVVPGQGDKERGYWRDVGSLDAYYQANMDLVDVDPSFSLYNDRWPIFTAQHNFPPVKFVFNNQTEGRVGYATDSLVSEGCIISGGHAHHCILSPKVRINSYSLVEDSILFENVNIGRHCKIRRAIVDKHVEIPANTTIGYDLEHDRKRFHVTESGIVVIPKAMRVEP.

Residues G161, 176–177, and S195 each bind alpha-D-glucose 1-phosphate; that span reads EK.

The protein belongs to the bacterial/plant glucose-1-phosphate adenylyltransferase family. As to quaternary structure, homotetramer.

The enzyme catalyses alpha-D-glucose 1-phosphate + ATP + H(+) = ADP-alpha-D-glucose + diphosphate. It functions in the pathway glycan biosynthesis; glycogen biosynthesis. Functionally, involved in the biosynthesis of ADP-glucose, a building block required for the elongation reactions to produce glycogen. Catalyzes the reaction between ATP and alpha-D-glucose 1-phosphate (G1P) to produce pyrophosphate and ADP-Glc. The polypeptide is Glucose-1-phosphate adenylyltransferase (Anaeromyxobacter sp. (strain Fw109-5)).